The following is a 1297-amino-acid chain: MIPTSVTNSPPPAGLGQNGASASLGSATAAAGGGMLSGLGMVAVSGCGSAGTGAQNNYGSVVLGLASLILEGRPIADDEYQQQTVGVVGSGAATAGSGGGRLSPRPSTSRAAINITTNPYGSMGGSENRAVNGSGSTGSPSSSSLTHQRWTQKLCQLRQISPAAQTMSAEPELVSLAINDLNKDHGDYEIVRRVMLNRAGGTGLVSSAGGGTNNSSAASSPGSNSSDNILHSLQSLATTCLRGGPALAPPPSVESRPLNLAFHWSGLGGSGGRGLGFGGGAASISNTPTTTATATASSGASSSASRPKHGPHCDQFLRKMGLAKGEMPSEAEEHICDMSYVNMTCNRWRAYCMKMEAILARREPVCIEVYLGPVSHKLLLEQWIICGREKVPPPTMTLPSLCSAIRSQLYFSQIVAWCDLLRKCDPSVYDSGRVIFSNCGNNAGDLATSYTTCGGQKRPRLNIFYRIKQHTTTNSNSGLHQEDGFSAKANVHNFPNVNVSESYSISVSVRSLPRINGGLPHVEPLPPSPAPRSLRPCGGDPASTPTGGGGLHAATPTGLGARTSALTPTTTAGGSNCDNGKPGMGQILDELDGDTSLSHRERQLQKYRKRMQRRDKKRERKATPDRLNSRQQSEEPMDEGEESQTQSQTTSETQSLALTLQQPRRIAMISTGTQTSLSSCQQCGSEKTLLCLSCTGGGGAHGGSNGTANGSTNGATDDGDDSDTTASEMEETSSCSLSSADLIVGTPRNNAELLLQAIQRTPKNRNRKPHPGVLDQVSCRNADLNGGQNNNLLKATPATSGCQVCKRQKTQHNFANGKVHQPTNGKQASNGYASMHLEAEKQPDVVQILATKLTPNIERCSLNPVERCKTPPPGVADHIVVQFKTPLSQVPAKHQPDAMVPLQQQQLGKSSSKPAQLRLNCGSNLLESETPPPMTSPQMRKALPKVNLTTIFCSSAPIAIGCPAFSFDPAALSHARSQLLAPDVSVTPPVQKSFSAPTLPHAASLSVSPRFSKQALAAHKRRSRHLSDRSDRSSLGSDEQLSDEDLESGLCSPAGGSPLKCRARLAAQFGGRPLLGNLEESLLQRRLMPKIEVMGFTLQLGASGGFCPTQVNIPAVSYFYELHGETLSTPYLCEIRLPRKGYSVPRSGTVQATLLNPIGTVVRMFVIPYDMRDMPPLHRTFIRQRILAEELSQDQDEGHKVPRSPTVTSTTSKLGHFISAEQMKRLRYSIHLKFQTSRSGRLCLHTDIRLLISRRTDCDTAAAHAKGVLEAPNELVTDTMMPAEPRYSARQESAGRI.

Disordered stretches follow at residues 1-22 and 117-149; these read MIPTSVTNSPPPAGLGQNGASA and TNPYGSMGGSENRAVNGSGSTGSPSSSSLTHQR. Residues 133–144 are compositionally biased toward low complexity; sequence GSGSTGSPSSSS. The segment at 174-182 is transactivation domain 1 (TAD1); that stretch reads VSLAINDLN. Disordered stretches follow at residues 206 to 227, 287 to 311, 518 to 655, 704 to 741, and 1017 to 1048; these read SSAGGGTNNSSAASSPGSNSSD, TPTTTATATASSGASSSASRPKHGP, GLPH…ETQS, SNGTANGSTNGATDDGDDSDTTASEMEETSSCSLSSAD, and AAHKRRSRHLSDRSDRSSLGSDEQLSDEDLES. Low complexity-rich tracts occupy residues 213–226 and 287–305; these read NNSSAASSPGSNSS and TPTTTATATASSGASSSAS. Residues 564–578 are compositionally biased toward polar residues; the sequence is SALTPTTTAGGSNCD. A compositionally biased stretch (basic residues) spans 605–620; it reads QKYRKRMQRRDKKRER. Low complexity-rich tracts occupy residues 643-655 and 706-716; these read SQTQSQTTSETQS and GTANGSTNGAT. Acidic residues predominate over residues 717–731; it reads DDGDDSDTTASEMEE. Positions 1074–1132 are required for macropage invasion; that stretch reads LLGNLEESLLQRRLMPKIEVMGFTLQLGASGGFCPTQVNIPAVSYFYELHGETLSTPYL. Residues 1150-1158 are transactivation domain 2 (TAD2); that stretch reads VQATLLNPI. The disordered stretch occupies residues 1192-1213; the sequence is SQDQDEGHKVPRSPTVTSTTSK. Residues 1203–1212 show a composition bias toward low complexity; the sequence is RSPTVTSTTS.

The protein belongs to the ATOS family. Expressed in macrophages.

The protein resides in the nucleus. In terms of biological role, transcription regulator that synchronizes transcriptional and translational programs to promote macrophage invasion of tissues. Required in macrophages for their early invasion into the extended germband. Induces transcriptional expression of metabolic enzymes as well as of the translational regulator pths/DDX47. With pths/DDX47, adjusts transcription and translation of a subset of OXPHOS genes to increase mitochondrial bioenergetics and allow macrophage tissue invasion. This is Protein Atossa from Drosophila melanogaster (Fruit fly).